Reading from the N-terminus, the 397-residue chain is Chorismate synthase (397 aa).

Arginine 40 and arginine 46 together coordinate NADP(+). FMN contacts are provided by residues 129 to 131 (RSS), 257 to 258 (QA), glycine 302, 317 to 321 (KPISS), and arginine 343.

Belongs to the chorismate synthase family. In terms of assembly, homotetramer. FMNH2 is required as a cofactor.

It catalyses the reaction 5-O-(1-carboxyvinyl)-3-phosphoshikimate = chorismate + phosphate. It functions in the pathway metabolic intermediate biosynthesis; chorismate biosynthesis; chorismate from D-erythrose 4-phosphate and phosphoenolpyruvate: step 7/7. Catalyzes the anti-1,4-elimination of the C-3 phosphate and the C-6 proR hydrogen from 5-enolpyruvylshikimate-3-phosphate (EPSP) to yield chorismate, which is the branch point compound that serves as the starting substrate for the three terminal pathways of aromatic amino acid biosynthesis. This reaction introduces a second double bond into the aromatic ring system. This Chlorobium phaeovibrioides (strain DSM 265 / 1930) (Prosthecochloris vibrioformis (strain DSM 265)) protein is Chorismate synthase.